The chain runs to 151 residues: Multiprotein-bridging factor 1 (151 aa).

The segment at M1–Q32 is disordered. Residues I86–K140 enclose the HTH cro/C1-type domain. Residues Q97–A116 constitute a DNA-binding region (H-T-H motif).

It belongs to the MBF1 family.

Transcriptional coactivator that stimulates GCN4-dependent transcriptional activity by bridging the DNA-binding region of GCN4 and TBP (SPT15), thereby recruiting TBP to GCN4-bound promoters. Involved in induction of the ribosome quality control (RQC) pathway; a pathway that degrades nascent peptide chains during problematic translation. Required to prevent stalled ribosomes from frameshifting. The sequence is that of Multiprotein-bridging factor 1 (MBF1) from Candida albicans (strain SC5314 / ATCC MYA-2876) (Yeast).